Reading from the N-terminus, the 432-residue chain is Glutamate-1-semialdehyde 2,1-aminomutase (432 aa).

K272 is modified (N6-(pyridoxal phosphate)lysine).

Belongs to the class-III pyridoxal-phosphate-dependent aminotransferase family. HemL subfamily. Homodimer. Pyridoxal 5'-phosphate is required as a cofactor.

Its subcellular location is the cytoplasm. It carries out the reaction (S)-4-amino-5-oxopentanoate = 5-aminolevulinate. Its pathway is porphyrin-containing compound metabolism; protoporphyrin-IX biosynthesis; 5-aminolevulinate from L-glutamyl-tRNA(Glu): step 2/2. The protein operates within porphyrin-containing compound metabolism; chlorophyll biosynthesis. The chain is Glutamate-1-semialdehyde 2,1-aminomutase from Trichodesmium erythraeum (strain IMS101).